A 596-amino-acid chain; its full sequence is ATP-dependent RNA helicase dbp3 (596 aa).

A compositionally biased stretch (basic and acidic residues) spans 1–17 (MPKRTLEDTELNPRDNY). Disordered regions lie at residues 1-87 (MPKR…ESTS) and 115-139 (EEKV…QNGT). Over residues 21 to 30 (SSKKSRKEKR) the composition is skewed to basic residues. Positions 47–120 (IDIEVESKEA…KEGKEEKVDI (74 aa)) form a coiled coil. The span at 123-139 (STDSATPISVAPQQNGT) shows a compositional bias: polar residues. Positions 180–207 (IKFDYLPITDSAQRAPFKDFKAPTPIQA) match the Q motif motif. A Helicase ATP-binding domain is found at 210–386 (WPFLLAGRDV…STFMTSPVKI (177 aa)). Residue 223-230 (AETGSGKT) participates in ATP binding. Residues 332–335 (DEAD) carry the DEAD box motif. In terms of domain architecture, Helicase C-terminal spans 417 to 566 (RLMQLLKQYQ…PVPDELLKFG (150 aa)).

This sequence belongs to the DEAD box helicase family. DDX5/DBP2 subfamily.

The protein localises to the nucleus. It is found in the nucleolus. The enzyme catalyses ATP + H2O = ADP + phosphate + H(+). Functionally, ATP-dependent RNA helicase required for 60S ribosomal subunit synthesis. Involved in efficient pre-rRNA processing, predominantly at site A3, which is necessary for the normal formation of 25S and 5.8S rRNAs. This is ATP-dependent RNA helicase dbp3 (dbp3) from Sclerotinia sclerotiorum (strain ATCC 18683 / 1980 / Ss-1) (White mold).